Consider the following 1439-residue polypeptide: Probable histone acetyltransferase HAC-like 2 (1439 aa).

Disordered stretches follow at residues 1-43 and 313-335; these read MKQG…ASAD and YGIS…TPTP. The span at 325 to 335 shows a compositional bias: polar residues; sequence VNPSTRSTPTP. A TAZ-type zinc finger spans residues 607–687; the sequence is ENTKQYHAQA…NEHCHVCCKA (81 aa). Residues 827–933 form a PHD-type; degenerate zinc finger; the sequence is KIHCHVQQET…EYTCFKCYIE (107 aa). The CBP/p300-type HAT domain maps to 948-1383; it reads VRGAKDLPRT…MLYHLHNPTG (436 aa). Positions 964–989 form a coiled coil; sequence EERLFKRLREERQERANKLKTSLDEV. Acetyl-CoA contacts are provided by residues 1071 to 1073, 1090 to 1091, and Trp1146; these read LDS and RT. The segment at 1265-1328 adopts a ZZ-type zinc-finger fold; the sequence is HLQYSCSHCC…ILHPVEIVGV (64 aa). Zn(2+) is bound by residues Cys1270, Cys1273, Cys1285, Cys1288, Cys1294, Cys1297, His1310, and His1318.

It is found in the nucleus. It carries out the reaction L-lysyl-[protein] + acetyl-CoA = N(6)-acetyl-L-lysyl-[protein] + CoA + H(+). Acetyltransferase enzyme. Acetylates histones, giving a specific tag for transcriptional activation. This is Probable histone acetyltransferase HAC-like 2 from Oryza sativa subsp. japonica (Rice).